Reading from the N-terminus, the 553-residue chain is MKKGSAVIKTLRVILSALALCVATSSAHAADTKKVDVLLVGGGIMSSTLGVWLHELQPNWSMTMVERLDGVALESSNGWNNAGTGHSALAELNYTPEKADGKVDISKAIEINESFQISRQFWAWQVKQGVLKNPHSFINSTPHMSFVWGDDNVRFLKKRYEALQASPLFRGMQYSEDYDQIKQWVPLMMEGRDRNQKVAATWTPIGTDVNFGEITRQFVGYLKTQPNFTLSLSSEVREITRNADGTWHVSWVKLHSDEPPQSVDAKFVFIGAGGGALHLLQASGIPEAKDYGAFPVGGSFLVTDNPEVVKQHLAKAYGKASVGSPPMSVPHLDTRIIDGKKIILFGPFATFSTKFLKNGSYFDLAKSTNLHNVAPMMRVGVDEFPLVQYLAGQLMLTDDDRFNALKEYFPNAKKEDWRLWQAGQRVQIIKRDPVKGGVLKLGTEIVASQDGSIAGLLGASPGASTAAPIMLNLMQKVFKDKVATPEWQQKIRQIVPSYGTKLNDSPAKVVEEWTYTSDVLQLSPPPKIDLGAPSQATGNAPARPAKASADMAL.

The disordered stretch occupies residues 524-553 (PPPKIDLGAPSQATGNAPARPAKASADMAL).

This sequence belongs to the MQO family. The cofactor is FAD.

The enzyme catalyses (S)-malate + a quinone = a quinol + oxaloacetate. It participates in carbohydrate metabolism; tricarboxylic acid cycle; oxaloacetate from (S)-malate (quinone route): step 1/1. The sequence is that of Probable malate:quinone oxidoreductase from Burkholderia cenocepacia (strain HI2424).